The following is a 104-amino-acid chain: UPF0213 protein plu4503 (104 aa).

A GIY-YIG domain is found at 4–79 (NQWVLYLLKT…KQLSKQQKER (76 aa)).

It belongs to the UPF0213 family.

This chain is UPF0213 protein plu4503, found in Photorhabdus laumondii subsp. laumondii (strain DSM 15139 / CIP 105565 / TT01) (Photorhabdus luminescens subsp. laumondii).